The chain runs to 720 residues: Methionine--tRNA ligase (720 aa).

A 'HIGH' region motif is present at residues 27–37; the sequence is PYANGQIHIGH. Cys158, Cys161, Cys171, and Cys174 together coordinate Zn(2+). The 'KMSKS' region motif lies at 348–352; the sequence is KMSKS. Lys351 is a binding site for ATP. Residues 614–720 enclose the tRNA-binding domain; that stretch reads DFAKVDLRIA…SGAKPGMRVK (107 aa).

The protein belongs to the class-I aminoacyl-tRNA synthetase family. MetG type 1 subfamily. As to quaternary structure, homodimer. The cofactor is Zn(2+).

It localises to the cytoplasm. The enzyme catalyses tRNA(Met) + L-methionine + ATP = L-methionyl-tRNA(Met) + AMP + diphosphate. In terms of biological role, is required not only for elongation of protein synthesis but also for the initiation of all mRNA translation through initiator tRNA(fMet) aminoacylation. The polypeptide is Methionine--tRNA ligase (Burkholderia ambifaria (strain ATCC BAA-244 / DSM 16087 / CCUG 44356 / LMG 19182 / AMMD) (Burkholderia cepacia (strain AMMD))).